The following is a 324-amino-acid chain: Homocysteine S-methyltransferase 1 (324 aa).

One can recognise a Hcy-binding domain in the interval 6–320; that stretch reads IKELIVEHPG…KDIAEIASAV (315 aa). Positions 238, 305, and 306 each coordinate Zn(2+).

Requires Zn(2+) as cofactor.

The protein localises to the cytoplasm. It catalyses the reaction S-methyl-L-methionine + L-homocysteine = 2 L-methionine + H(+). Functionally, homocysteine S-methyltransferase involved in the conversion of S-adenosylmethionine (AdoMet) to methionine to control the methionine/AdoMet ratio. Also converts S-methylmethionine (SMM) to methionine. The sequence is that of Homocysteine S-methyltransferase 1 (MHT1) from Saccharomyces cerevisiae (strain ATCC 204508 / S288c) (Baker's yeast).